We begin with the raw amino-acid sequence, 280 residues long: Undecaprenyl-diphosphatase (280 aa).

The next 8 membrane-spanning stretches (helical) occupy residues 19-39 (FLPV…PFSG), 44-64 (FDDL…LFLY), 89-109 (FYFL…GFIA), 125-145 (ILAS…WFFQ), 156-176 (VGFR…IPGV), 197-217 (AEFS…YKLI), 226-246 (VTIP…TLVI), and 259-279 (GVFG…TKFI).

This sequence belongs to the UppP family.

The protein resides in the cell inner membrane. It catalyses the reaction di-trans,octa-cis-undecaprenyl diphosphate + H2O = di-trans,octa-cis-undecaprenyl phosphate + phosphate + H(+). Functionally, catalyzes the dephosphorylation of undecaprenyl diphosphate (UPP). Confers resistance to bacitracin. The polypeptide is Undecaprenyl-diphosphatase (Leptospira borgpetersenii serovar Hardjo-bovis (strain L550)).